Here is a 330-residue protein sequence, read N- to C-terminus: Ribosomal RNA small subunit methyltransferase H (330 aa).

S-adenosyl-L-methionine is bound by residues 48-50, D67, L101, D115, and Q122; that span reads GGH.

It belongs to the methyltransferase superfamily. RsmH family.

It is found in the cytoplasm. It catalyses the reaction cytidine(1402) in 16S rRNA + S-adenosyl-L-methionine = N(4)-methylcytidine(1402) in 16S rRNA + S-adenosyl-L-homocysteine + H(+). Functionally, specifically methylates the N4 position of cytidine in position 1402 (C1402) of 16S rRNA. The polypeptide is Ribosomal RNA small subunit methyltransferase H (Pseudarthrobacter chlorophenolicus (strain ATCC 700700 / DSM 12829 / CIP 107037 / JCM 12360 / KCTC 9906 / NCIMB 13794 / A6) (Arthrobacter chlorophenolicus)).